A 38-amino-acid chain; its full sequence is Cytochrome b6-f complex subunit 5 (38 aa).

A helical transmembrane segment spans residues 5–25 (LLLGIVLGLIPITLAGLFVAA).

This sequence belongs to the PetG family. The 4 large subunits of the cytochrome b6-f complex are cytochrome b6, subunit IV (17 kDa polypeptide, PetD), cytochrome f and the Rieske protein, while the 4 small subunits are PetG, PetL, PetM and PetN. The complex functions as a dimer.

The protein localises to the cellular thylakoid membrane. Its function is as follows. Component of the cytochrome b6-f complex, which mediates electron transfer between photosystem II (PSII) and photosystem I (PSI), cyclic electron flow around PSI, and state transitions. PetG is required for either the stability or assembly of the cytochrome b6-f complex. This chain is Cytochrome b6-f complex subunit 5, found in Crocosphaera subtropica (strain ATCC 51142 / BH68) (Cyanothece sp. (strain ATCC 51142)).